Here is a 325-residue protein sequence, read N- to C-terminus: Delta(1)-pyrroline-2-carboxylate reductase (325 aa).

The protein belongs to the ornithine cyclodeaminase/mu-crystallin family.

The enzyme catalyses L-proline + NAD(+) = 1-pyrroline-2-carboxylate + NADH + H(+). The catalysed reaction is L-proline + NADP(+) = 1-pyrroline-2-carboxylate + NADPH + H(+). Functionally, catalyzes the reduction of Delta(1)-pyrroline-2-carboxylate (Pyr2C) to L-proline, using preferentially NADPH over NADH as the electron donor. Is likely involved in a degradation pathway that converts trans-3-hydroxy-L-proline (t3LHyp) to L-proline. This is Delta(1)-pyrroline-2-carboxylate reductase from Bacillus cereus (strain ATCC 10987 / NRS 248).